We begin with the raw amino-acid sequence, 258 residues long: Tryptophan synthase alpha chain (258 aa).

Active-site proton acceptor residues include glutamate 52 and aspartate 63.

Belongs to the TrpA family. Tetramer of two alpha and two beta chains.

The catalysed reaction is (1S,2R)-1-C-(indol-3-yl)glycerol 3-phosphate + L-serine = D-glyceraldehyde 3-phosphate + L-tryptophan + H2O. The protein operates within amino-acid biosynthesis; L-tryptophan biosynthesis; L-tryptophan from chorismate: step 5/5. In terms of biological role, the alpha subunit is responsible for the aldol cleavage of indoleglycerol phosphate to indole and glyceraldehyde 3-phosphate. In Streptococcus pneumoniae (strain ATCC 700669 / Spain 23F-1), this protein is Tryptophan synthase alpha chain.